The following is a 233-amino-acid chain: Histone H1-I (233 aa).

Disordered stretches follow at residues 1–55 and 115–233; these read MSDS…HPPV and TGAS…KKSK. Over residues 17 to 29 the composition is skewed to low complexity; that stretch reads KAASPAKSPAKSP. The H15 domain maps to 51–125; that stretch reads THPPVSEMVV…GASGSFKMPP (75 aa). Basic and acidic residues-rich tracts occupy residues 128 to 137 and 146 to 155; these read KKVDRPESAP and TRVERKEKKV. 2 stretches are compositionally biased toward basic residues: residues 172 to 213 and 223 to 233; these read AAKK…KPTP and AAARKPAKKSK.

This sequence belongs to the histone H1/H5 family.

The protein localises to the nucleus. Its subcellular location is the chromosome. Its function is as follows. Histones H1 are necessary for the condensation of nucleosome chains into higher-order structures. The sequence is that of Histone H1-I from Glyptotendipes barbipes (Midge).